Consider the following 87-residue polypeptide: UPF0250 protein YE3006 (87 aa).

Belongs to the UPF0250 family.

This Yersinia enterocolitica serotype O:8 / biotype 1B (strain NCTC 13174 / 8081) protein is UPF0250 protein YE3006.